Consider the following 311-residue polypeptide: 4-diphosphocytidyl-2-C-methyl-D-erythritol kinase (311 aa).

Lysine 9 is a catalytic residue. 95–105 serves as a coordination point for ATP; sequence PLGAGLAGGST. Residue aspartate 137 is part of the active site.

It belongs to the GHMP kinase family. IspE subfamily.

It catalyses the reaction 4-CDP-2-C-methyl-D-erythritol + ATP = 4-CDP-2-C-methyl-D-erythritol 2-phosphate + ADP + H(+). It participates in isoprenoid biosynthesis; isopentenyl diphosphate biosynthesis via DXP pathway; isopentenyl diphosphate from 1-deoxy-D-xylulose 5-phosphate: step 3/6. Catalyzes the phosphorylation of the position 2 hydroxy group of 4-diphosphocytidyl-2C-methyl-D-erythritol. In Thermosynechococcus vestitus (strain NIES-2133 / IAM M-273 / BP-1), this protein is 4-diphosphocytidyl-2-C-methyl-D-erythritol kinase.